We begin with the raw amino-acid sequence, 83 residues long: Kunitz serine protease inhibitor Pr-mulgin 2 (83 aa).

Residues 1–24 form the signal peptide; it reads MSSGGLLLLLGLLTLWEGLTPVSS. One can recognise a BPTI/Kunitz inhibitor domain in the interval 31–81; the sequence is CHLPHDPGPCKGNFQAFYYHPVRRTCLEFIYGGCQGNPNNFKTIDECKRTC. Cystine bridges form between C31–C81, C40–C64, and C56–C77.

It belongs to the venom Kunitz-type family. In terms of tissue distribution, expressed by the venom gland.

It is found in the secreted. Functionally, serine protease inhibitor that acts against trypsin (EC(50)=10 nM, Ki=5nM), chymotrypsin (EC(50)=100 nM, Ki=40 nM), and plasmin (EC(50)=100 nM, Ki=40 nM). The polypeptide is Kunitz serine protease inhibitor Pr-mulgin 2 (Pseudechis rossignolii (Papuan pigmy mulga snake)).